The sequence spans 329 residues: DNA-directed RNA polymerase subunit alpha (329 aa).

Residues 1-235 are alpha N-terminal domain (alpha-NTD); it reads MQGSVTEFLK…EQLDAFVDLR (235 aa). Positions 249 to 329 are alpha C-terminal domain (alpha-CTD); the sequence is FDPILLRPVD…NWPPASIAED (81 aa).

Belongs to the RNA polymerase alpha chain family. Homodimer. The RNAP catalytic core consists of 2 alpha, 1 beta, 1 beta' and 1 omega subunit. When a sigma factor is associated with the core the holoenzyme is formed, which can initiate transcription.

The enzyme catalyses RNA(n) + a ribonucleoside 5'-triphosphate = RNA(n+1) + diphosphate. Functionally, DNA-dependent RNA polymerase catalyzes the transcription of DNA into RNA using the four ribonucleoside triphosphates as substrates. This chain is DNA-directed RNA polymerase subunit alpha, found in Histophilus somni (strain 129Pt) (Haemophilus somnus).